Consider the following 831-residue polypeptide: Periplasmic nitrate reductase (831 aa).

The segment at residues 1–29 is a signal peptide (tat-type signal); that stretch reads MTLTRRDLIKAQAAATAAAAAGLPVSALA. A 4Fe-4S Mo/W bis-MGD-type domain is found at 41–97; the sequence is IRWSKAPCRFCGTGCGVMVGTRDGQVVATHGDTQAEVNRGLNCVKGYFLSKIMYGED. Residues Cys-48, Cys-51, Cys-55, and Cys-83 each coordinate [4Fe-4S] cluster. Residues Lys-85, Gln-152, Asn-177, Cys-181, 214–221, 245–249, 264–266, Met-375, Gln-379, Asn-485, 511–512, Lys-534, Asp-561, and 721–730 contribute to the Mo-bis(molybdopterin guanine dinucleotide) site; these read WGSNMAEM, STFTH, GTD, SD, and TGRVLEHWHS. Residue Trp-797 participates in substrate binding. Mo-bis(molybdopterin guanine dinucleotide)-binding residues include Asn-805 and Lys-822.

Belongs to the prokaryotic molybdopterin-containing oxidoreductase family. NasA/NapA/NarB subfamily. Component of the periplasmic nitrate reductase NapAB complex composed of NapA and NapB. The cofactor is [4Fe-4S] cluster. Mo-bis(molybdopterin guanine dinucleotide) serves as cofactor. In terms of processing, predicted to be exported by the Tat system. The position of the signal peptide cleavage has not been experimentally proven.

It localises to the periplasm. The catalysed reaction is 2 Fe(II)-[cytochrome] + nitrate + 2 H(+) = 2 Fe(III)-[cytochrome] + nitrite + H2O. Functionally, catalytic subunit of the periplasmic nitrate reductase complex NapAB. Receives electrons from NapB and catalyzes the reduction of nitrate to nitrite. This Cereibacter sphaeroides (strain ATCC 17023 / DSM 158 / JCM 6121 / CCUG 31486 / LMG 2827 / NBRC 12203 / NCIMB 8253 / ATH 2.4.1.) (Rhodobacter sphaeroides) protein is Periplasmic nitrate reductase.